The chain runs to 428 residues: Type II methyltransferase M.TthHB8I (428 aa).

Residues 407–428 form a disordered region; that stretch reads RKGNTERRKHGPYTSPESAGSF.

This sequence belongs to the N(4)/N(6)-methyltransferase family.

The enzyme catalyses a 2'-deoxyadenosine in DNA + S-adenosyl-L-methionine = an N(6)-methyl-2'-deoxyadenosine in DNA + S-adenosyl-L-homocysteine + H(+). Functionally, a gamma subtype methylase, recognizes the double-stranded sequence 5'-TCGA-3', methylates A-4 on both strands and protects the DNA from cleavage by the TthHB8I endonuclease. The protein is Type II methyltransferase M.TthHB8I of Thermus thermophilus (strain ATCC 27634 / DSM 579 / HB8).